An 84-amino-acid chain; its full sequence is Defensin-like protein 116 (84 aa).

Residues 1–24 (MAITKNMLVVLLLTIIFVTSSVHC) form the signal peptide. Disulfide bonds link C40–C80, C46–C71, C55–C78, and C59–C79.

It belongs to the DEFL family.

The protein resides in the secreted. The sequence is that of Defensin-like protein 116 from Arabidopsis thaliana (Mouse-ear cress).